A 944-amino-acid polypeptide reads, in one-letter code: 2-oxoglutarate dehydrogenase E1 component (944 aa).

A disordered region spans residues 914-944; the sequence is RRRRSSPAEGDPTVHKKEQERIVSDSLTRKN. Positions 925–936 are enriched in basic and acidic residues; it reads PTVHKKEQERIV.

Belongs to the alpha-ketoglutarate dehydrogenase family. In terms of assembly, homodimer. Part of the 2-oxoglutarate dehydrogenase (OGDH) complex composed of E1 (2-oxoglutarate dehydrogenase), E2 (dihydrolipoamide succinyltransferase) and E3 (dihydrolipoamide dehydrogenase); the complex contains multiple copies of the three enzymatic components (E1, E2 and E3). It depends on thiamine diphosphate as a cofactor.

The enzyme catalyses N(6)-[(R)-lipoyl]-L-lysyl-[protein] + 2-oxoglutarate + H(+) = N(6)-[(R)-S(8)-succinyldihydrolipoyl]-L-lysyl-[protein] + CO2. Its function is as follows. E1 component of the 2-oxoglutarate dehydrogenase (OGDH) complex which catalyzes the decarboxylation of 2-oxoglutarate, the first step in the conversion of 2-oxoglutarate to succinyl-CoA and CO(2). This chain is 2-oxoglutarate dehydrogenase E1 component, found in Bacillus subtilis (strain 168).